Consider the following 544-residue polypeptide: Pectinesterase 3 (544 aa).

N-linked (GlcNAc...) asparagine glycans are attached at residues asparagine 174, asparagine 257, and asparagine 291. Substrate-binding residues include threonine 306 and glutamine 336. Aspartate 359 (proton donor) is an active-site residue. The active-site Nucleophile is aspartate 380. Substrate contacts are provided by arginine 448 and tryptophan 450. N-linked (GlcNAc...) asparagine glycosylation occurs at asparagine 532.

The protein in the N-terminal section; belongs to the PMEI family. This sequence in the C-terminal section; belongs to the pectinesterase family.

The protein resides in the secreted. It is found in the cell wall. It carries out the reaction [(1-&gt;4)-alpha-D-galacturonosyl methyl ester](n) + n H2O = [(1-&gt;4)-alpha-D-galacturonosyl](n) + n methanol + n H(+). Its pathway is glycan metabolism; pectin degradation; 2-dehydro-3-deoxy-D-gluconate from pectin: step 1/5. Functionally, acts in the modification of cell walls via demethylesterification of cell wall pectin. The protein is Pectinesterase 3 (PME3) of Solanum lycopersicum (Tomato).